The sequence spans 553 residues: Transcriptional regulator HilA (553 aa).

Residues 11-107 (NKKFVFDDFI…LYGQGYRFNR (97 aa)) constitute a DNA-binding region (ompR/PhoB-type). A 4-aspartylphosphate modification is found at D62. One copy of the TPR repeat lies at 372 to 405 (ADIKYYYGWNLFMAGQLEEALQTINECLKLDPTR).

Its function is as follows. The main transcriptional regulator of the Salmonella pathogenicity island 1 (SPI1) gene expression. Activates the expression of invasion genes by a direct action at their promoters and also indirectly by increasing the level of InvF. Also binds upstream of prgH and directly activates the expression of prgHIJK operon. The chain is Transcriptional regulator HilA (hilA) from Salmonella typhimurium (strain LT2 / SGSC1412 / ATCC 700720).